The following is a 556-amino-acid chain: Formate--tetrahydrofolate ligase (556 aa).

Residue 65 to 72 (TPAGEGKS) coordinates ATP.

It belongs to the formate--tetrahydrofolate ligase family.

It carries out the reaction (6S)-5,6,7,8-tetrahydrofolate + formate + ATP = (6R)-10-formyltetrahydrofolate + ADP + phosphate. It functions in the pathway one-carbon metabolism; tetrahydrofolate interconversion. The chain is Formate--tetrahydrofolate ligase from Streptococcus thermophilus (strain ATCC BAA-250 / LMG 18311).